The following is a 301-amino-acid chain: Probable alpha-L-glutamate ligase (301 aa).

Residues 104–287 (LQLLSRRGIG…VAGMIIEYLE (184 aa)) enclose the ATP-grasp domain. ATP is bound by residues Lys-141, 178-179 (EY), Asp-187, and 211-213 (RSN). 3 residues coordinate Mg(2+): Asp-248, Glu-260, and Asn-262. 3 residues coordinate Mn(2+): Asp-248, Glu-260, and Asn-262.

This sequence belongs to the RimK family. The cofactor is Mg(2+). It depends on Mn(2+) as a cofactor.

In Pseudomonas savastanoi pv. phaseolicola (strain 1448A / Race 6) (Pseudomonas syringae pv. phaseolicola (strain 1448A / Race 6)), this protein is Probable alpha-L-glutamate ligase.